Reading from the N-terminus, the 200-residue chain is Phospholipase D (200 aa).

A signal peptide spans methionine 1–glycine 25. Residues valine 142–alanine 169 enclose the PLD phosphodiesterase domain. Catalysis depends on residues histidine 147, lysine 149, and aspartate 154.

The protein belongs to the phospholipase D family. As to quaternary structure, homodimer.

The protein resides in the secreted. The enzyme catalyses a 1,2-diacyl-sn-glycero-3-phosphocholine + H2O = a 1,2-diacyl-sn-glycero-3-phosphate + choline + H(+). In terms of biological role, could be a virulence factor. This chain is Phospholipase D (pld), found in Rickettsia conorii (strain ATCC VR-613 / Malish 7).